A 2201-amino-acid chain; its full sequence is RNA-directed RNA polymerase L (2201 aa).

Residues 26–285 (KNIMLAQTQI…VCSKSVEYTF (260 aa)) form an endonuclease region. The Mn(2+) site is built by Glu-51, Asp-88, and Glu-101. Lys-114 is a catalytic residue. The 197-residue stretch at 1156–1352 (LDMKSVVRQS…FLSDRLNKFV (197 aa)) folds into the RdRp catalytic domain. Mg(2+) is bound at residue Asp-1312.

This sequence belongs to the Bunyavirales RNA polymerase family. As to quaternary structure, homomultimer; the oligomeric structure is essential for the polymerase activity. Interacts with nucleoprotein N. Interacts with protein Z; this interaction inhibits viral transcription and replication, Z partially blocks the product exit tunnel for the releasing nascent RNA product. Requires Mn(2+) as cofactor. It depends on Mg(2+) as a cofactor.

The protein localises to the virion. It is found in the host cytoplasm. It carries out the reaction RNA(n) + a ribonucleoside 5'-triphosphate = RNA(n+1) + diphosphate. Functionally, RNA-dependent RNA polymerase, which is responsible for the replication and transcription of the viral RNA genome using antigenomic RNA as an intermediate. During transcription, synthesizes subgenomic RNAs and assures their capping by a cap-snatching mechanism, which involves the endonuclease activity cleaving the host capped pre-mRNAs. These short capped RNAs are then used as primers for viral transcription. The 3'-end of subgenomic mRNAs molecules are heterogeneous and not polyadenylated. The replicase function is to direct synthesis of antigenomic and genomic RNA which are encapsidated and non capped. As a consequence of the use of the same enzyme for both transcription and replication, these mechanisms need to be well coordinated. These processes may be regulated by proteins N and Z in a dose-dependent manner. Z protein inhibits the viral polymerase L und thus the viral transcription and RNA synthesis. In Oecomys bicolor (Bicolored arboreal rice rat), this protein is RNA-directed RNA polymerase L.